A 181-amino-acid chain; its full sequence is Peptide deformylase (181 aa).

Fe cation is bound by residues cysteine 103 and histidine 145. Residue glutamate 146 is part of the active site. Histidine 149 lines the Fe cation pocket.

It belongs to the polypeptide deformylase family. Requires Fe(2+) as cofactor.

It catalyses the reaction N-terminal N-formyl-L-methionyl-[peptide] + H2O = N-terminal L-methionyl-[peptide] + formate. Its function is as follows. Removes the formyl group from the N-terminal Met of newly synthesized proteins. Requires at least a dipeptide for an efficient rate of reaction. N-terminal L-methionine is a prerequisite for activity but the enzyme has broad specificity at other positions. The chain is Peptide deformylase from Orientia tsutsugamushi (strain Boryong) (Rickettsia tsutsugamushi).